Consider the following 205-residue polypeptide: Holliday junction branch migration complex subunit RuvA (205 aa).

A domain I region spans residues 1–64 (MIGRLRGIIL…EDAQLLFGFN (64 aa)). Residues 65–142 (DKQERALFRE…KGLSGDLFNP (78 aa)) are domain II. Residues 143-156 (VSDIPLASPASAES) are flexible linker. The interval 157–205 (RASDPEAEAAAALVALGYKPQEASRMISKIARPEADCETLIRDALRAAL) is domain III.

The protein belongs to the RuvA family. Homotetramer. Forms an RuvA(8)-RuvB(12)-Holliday junction (HJ) complex. HJ DNA is sandwiched between 2 RuvA tetramers; dsDNA enters through RuvA and exits via RuvB. An RuvB hexamer assembles on each DNA strand where it exits the tetramer. Each RuvB hexamer is contacted by two RuvA subunits (via domain III) on 2 adjacent RuvB subunits; this complex drives branch migration. In the full resolvosome a probable DNA-RuvA(4)-RuvB(12)-RuvC(2) complex forms which resolves the HJ.

The protein localises to the cytoplasm. The RuvA-RuvB-RuvC complex processes Holliday junction (HJ) DNA during genetic recombination and DNA repair, while the RuvA-RuvB complex plays an important role in the rescue of blocked DNA replication forks via replication fork reversal (RFR). RuvA specifically binds to HJ cruciform DNA, conferring on it an open structure. The RuvB hexamer acts as an ATP-dependent pump, pulling dsDNA into and through the RuvAB complex. HJ branch migration allows RuvC to scan DNA until it finds its consensus sequence, where it cleaves and resolves the cruciform DNA. In Pectobacterium carotovorum subsp. carotovorum (strain PC1), this protein is Holliday junction branch migration complex subunit RuvA.